A 232-amino-acid chain; its full sequence is Ribonuclease 3 (232 aa).

In terms of domain architecture, RNase III spans 6-133 (FNDIENRLGV…VIAAVYLDKG (128 aa)). Glu46 is a binding site for Mg(2+). Residue Asp50 is part of the active site. 2 residues coordinate Mg(2+): Asp119 and Glu122. Glu122 is a catalytic residue. The DRBM domain occupies 160 to 229 (DFKTKLQELL…AKEALKRLEK (70 aa)).

Belongs to the ribonuclease III family. As to quaternary structure, homodimer. Requires Mg(2+) as cofactor.

It localises to the cytoplasm. It carries out the reaction Endonucleolytic cleavage to 5'-phosphomonoester.. Digests double-stranded RNA. Involved in the processing of primary rRNA transcript to yield the immediate precursors to the large and small rRNAs (23S and 16S). Processes some mRNAs, and tRNAs when they are encoded in the rRNA operon. Processes pre-crRNA and tracrRNA of type II CRISPR loci if present in the organism. The polypeptide is Ribonuclease 3 (Clostridium botulinum (strain Alaska E43 / Type E3)).